We begin with the raw amino-acid sequence, 1240 residues long: Ubiquitin carboxyl-terminal hydrolase 36 (1240 aa).

Disordered stretches follow at residues 37–56 (AKTS…STDN) and 100–144 (SNGG…GTSA). 2 stretches are compositionally biased toward low complexity: residues 47–56 (SSTSGSSTDN) and 101–132 (NGGA…DNNG). The USP domain maps to 202-512 (TGMLNVGNTC…NAYIMFYELD (311 aa)). Catalysis depends on C211, which acts as the Nucleophile. H471 functions as the Proton acceptor in the catalytic mechanism. Positions 637-705 (ANKSSCNTLN…KMFEESSESV (69 aa)) are disordered. The segment covering 639–649 (KSSCNTLNNSK) has biased composition (polar residues). Low complexity predominate over residues 650-662 (QHQPQQQQQQPQH). A compositionally biased stretch (acidic residues) spans 668 to 680 (SDEEEDSDDDNDN). T715 is subject to Phosphothreonine. Disordered stretches follow at residues 723–818 (YESA…KQKT), 831–998 (YKNK…GESL), 1076–1163 (DMSS…EYES), and 1198–1240 (RFAG…QQQS). Phosphoserine is present on residues S725 and S727. Residues 733–744 (QQQQQQQTLQQQ) are compositionally biased toward low complexity. Over residues 759 to 769 (SDTDDDDDEEQ) the composition is skewed to acidic residues. Over residues 794–815 (NSSSSKTKSASNASSANVNSSK) the composition is skewed to low complexity. The segment covering 843 to 859 (DDDDDDDEDEDEDEDEA) has biased composition (acidic residues). A compositionally biased stretch (low complexity) spans 869-879 (TKSSSSSSSTS). Polar residues predominate over residues 880-890 (LTNGWQQSQNG). Position 895 is a phosphoserine (S895). Phosphothreonine is present on T898. S901 bears the Phosphoserine mark. A compositionally biased stretch (acidic residues) spans 918–941 (DEDDDENVDGVADADDDDDNDEVA). Over residues 976–988 (LNGSSKSQQTTPR) the composition is skewed to polar residues. Residues 1076–1103 (DMSSSSSSSSSTNSSSNSSSRSNGNSSN) are compositionally biased toward low complexity. The segment covering 1111–1120 (AEAREQRKRD) has biased composition (basic and acidic residues). The segment covering 1231–1240 (QSSGQQQQQS) has biased composition (low complexity).

Belongs to the peptidase C19 family. As to quaternary structure, interacts with atms/PAF1, but not with CycT.

Its subcellular location is the nucleus. The protein localises to the nucleolus. It carries out the reaction Thiol-dependent hydrolysis of ester, thioester, amide, peptide and isopeptide bonds formed by the C-terminal Gly of ubiquitin (a 76-residue protein attached to proteins as an intracellular targeting signal).. In terms of biological role, required for maintaining multiple types of adult stem cells, including male and female germline, epithelial follicle cell and intestinal stem cells. May function as a transcriptional repressor by continually deubiquiting histone H2B at the promoters of genes critical for cellular differentiation, thereby preventing histone H3 'Lys-4' trimethylation (H3K4). Controls selective autophagy activation by ubiquitinated proteins. The protein is Ubiquitin carboxyl-terminal hydrolase 36 (Usp36) of Drosophila grimshawi (Hawaiian fruit fly).